A 345-amino-acid polypeptide reads, in one-letter code: S-adenosylmethionine:tRNA ribosyltransferase-isomerase (345 aa).

It belongs to the QueA family. Monomer.

It localises to the cytoplasm. The enzyme catalyses 7-aminomethyl-7-carbaguanosine(34) in tRNA + S-adenosyl-L-methionine = epoxyqueuosine(34) in tRNA + adenine + L-methionine + 2 H(+). Its pathway is tRNA modification; tRNA-queuosine biosynthesis. In terms of biological role, transfers and isomerizes the ribose moiety from AdoMet to the 7-aminomethyl group of 7-deazaguanine (preQ1-tRNA) to give epoxyqueuosine (oQ-tRNA). The chain is S-adenosylmethionine:tRNA ribosyltransferase-isomerase from Helicobacter pylori (strain P12).